The primary structure comprises 175 residues: uncharacterized protein (175 aa).

Positions 1–22 (MNRIVGILISILMLACIGVTMA) are cleaved as a signal peptide.

This is an uncharacterized protein from Archaeoglobus fulgidus (strain ATCC 49558 / DSM 4304 / JCM 9628 / NBRC 100126 / VC-16).